A 1128-amino-acid polypeptide reads, in one-letter code: Zinc finger protein 654 (1128 aa).

The interval 498–523 (GFDSLTDQSTGETDPDDVSGVQPKGH) is disordered. C2H2-type zinc fingers lie at residues 572 to 594 (FACV…LKNH), 746 to 771 (FKCP…MTVH), 787 to 809 (GKCK…LNRH), 815 to 839 (YFCL…TKSH), and 844 to 868 (AQCS…EAQH). A disordered region spans residues 891-951 (DSNPNQEKDS…GNERSDDTVS (61 aa)). Polar residues-rich tracts occupy residues 903–915 (NEKQ…VSTS) and 937–951 (SLVQ…DTVS). S1123 and S1127 each carry phosphoserine.

The protein belongs to the krueppel C2H2-type zinc-finger protein family.

It is found in the nucleus. May be involved in transcriptional regulation. This Homo sapiens (Human) protein is Zinc finger protein 654.